Reading from the N-terminus, the 181-residue chain is Inner membrane-spanning protein YciB (181 aa).

A run of 5 helical transmembrane segments spans residues 10-30, 50-70, 80-100, 118-138, and 148-168; these read LVIFFAVYKFFDIYIASGALI, MHLITFAMVSVFGSLTLILHD, IVYALFAIALAVSQFMNKPIL, VTWYWVLFFVVCGLVNIYVAF, and FKVFGLTALTLINTVLTVFYL.

It belongs to the YciB family.

The protein localises to the cell inner membrane. Functionally, plays a role in cell envelope biogenesis, maintenance of cell envelope integrity and membrane homeostasis. This chain is Inner membrane-spanning protein YciB, found in Shewanella piezotolerans (strain WP3 / JCM 13877).